Reading from the N-terminus, the 248-residue chain is tRNA pseudouridine synthase A (248 aa).

Residue D53 is the Nucleophile of the active site. Position 111 (Y111) interacts with substrate.

Belongs to the tRNA pseudouridine synthase TruA family. Homodimer.

It catalyses the reaction uridine(38/39/40) in tRNA = pseudouridine(38/39/40) in tRNA. Its function is as follows. Formation of pseudouridine at positions 38, 39 and 40 in the anticodon stem and loop of transfer RNAs. In Listeria innocua serovar 6a (strain ATCC BAA-680 / CLIP 11262), this protein is tRNA pseudouridine synthase A.